Here is a 1116-residue protein sequence, read N- to C-terminus: Surface layer protein (1116 aa).

Positions 1 to 53 (MQDSGFKKKDRSTNIPQEQFVYTRGGEHKVMKKVVNSVLASALAITVAPMAFA) are cleaved as a signal peptide. 3 SLH domains span residues 54–117 (AEDT…KLAQ), 118–181 (FNTT…RGVW), and 182–231 (PNSM…YGTD).

It localises to the secreted. It is found in the cell wall. Its subcellular location is the S-layer. The protein is Surface layer protein of Brevibacillus choshinensis.